We begin with the raw amino-acid sequence, 285 residues long: Probable endonuclease 4 (285 aa).

His69, His109, Glu145, Asp179, His182, His216, Asp229, His231, and Glu261 together coordinate Zn(2+).

The protein belongs to the AP endonuclease 2 family. It depends on Zn(2+) as a cofactor.

The catalysed reaction is Endonucleolytic cleavage to 5'-phosphooligonucleotide end-products.. Endonuclease IV plays a role in DNA repair. It cleaves phosphodiester bonds at apurinic or apyrimidinic (AP) sites, generating a 3'-hydroxyl group and a 5'-terminal sugar phosphate. The sequence is that of Probable endonuclease 4 from Salmonella heidelberg (strain SL476).